A 355-amino-acid chain; its full sequence is Arginine kinase (355 aa).

The Phosphagen kinase N-terminal domain occupies 8-90 (KLQAGFKKLE…FDPIIEDYHV (83 aa)). Residue 63–67 (GVGIY) participates in L-arginine binding. A Phosphagen kinase C-terminal domain is found at 118–355 (YVISTRVRCG…LQLIKMEKEM (238 aa)). Residues 121–125 (STRVR) and His184 each bind ATP. Residue Glu224 participates in L-arginine binding. Arg228 provides a ligand contact to ATP. Cys270 serves as a coordination point for L-arginine. ATP is bound by residues 279–283 (RASVH) and 308–313 (RGTRGE). Glu313 is a binding site for L-arginine.

The protein belongs to the ATP:guanido phosphotransferase family. Monomer.

It carries out the reaction L-arginine + ATP = N(omega)-phospho-L-arginine + ADP + H(+). The polypeptide is Arginine kinase (Penaeus japonicus (Kuruma prawn)).